The following is a 141-amino-acid chain: MDSRICTSFARLMASALCVSTLLVTAMPFDLRRGSSDTDLDLQGHVDLGLDDLDKLRLIFPPGLIEEAFSQAQGKVDMPLPRQRTSSRSSERWAPKSKRFDFGFAGLDTYDAIHRALEQPARGTSNSGSGYNMLMKMQRHG.

Residues 1-26 (MDSRICTSFARLMASALCVSTLLVTA) form the signal peptide. The tract at residues 75 to 94 (KVDMPLPRQRTSSRSSERWA) is disordered. His140 carries the histidine amide modification.

Neurons.

It localises to the secreted. Its function is as follows. Mediates intrinsic neuromodulation. The sequence is that of Neuropeptides CP2 (CP2PP) from Aplysia californica (California sea hare).